The following is a 1159-amino-acid chain: ATP-dependent helicase/deoxyribonuclease subunit B (1159 aa).

Residue 8-15 (GRAGSGKT) participates in ATP binding. [4Fe-4S] cluster contacts are provided by C784, C1102, C1105, and C1111. The disordered stretch occupies residues 1140–1159 (VKEDGSQVDGRTEGSDNNEG).

Belongs to the helicase family. AddB/RexB type 1 subfamily. In terms of assembly, heterodimer of AddA and AddB. The cofactor is Mg(2+). Requires [4Fe-4S] cluster as cofactor.

Its function is as follows. The heterodimer acts as both an ATP-dependent DNA helicase and an ATP-dependent, dual-direction single-stranded exonuclease. Recognizes the chi site generating a DNA molecule suitable for the initiation of homologous recombination. The AddB subunit has 5' -&gt; 3' nuclease activity but not helicase activity. The chain is ATP-dependent helicase/deoxyribonuclease subunit B from Caldanaerobacter subterraneus subsp. tengcongensis (strain DSM 15242 / JCM 11007 / NBRC 100824 / MB4) (Thermoanaerobacter tengcongensis).